Consider the following 463-residue polypeptide: Chromosomal replication initiator protein DnaA (463 aa).

Residues 1–83 are domain I, interacts with DnaA modulators; it reads MSLSLWQQCL…LRFEVGSKPI (83 aa). Residues 83–126 form a domain II region; it reads IVPVAVSSAASSGASVPPAAVRASSLARPSWERVTAQPELSYRS. The tract at residues 127 to 343 is domain III, AAA+ region; sequence NVNPKHTFDN…GALNRVIANA (217 aa). Gly-171, Gly-173, Lys-174, and Thr-175 together coordinate ATP. Residues 344–463 are domain IV, binds dsDNA; that stretch reads NFTGRAITID…FSNLIRTLSS (120 aa).

It belongs to the DnaA family. In terms of assembly, oligomerizes as a right-handed, spiral filament on DNA at oriC.

The protein resides in the cytoplasm. Functionally, plays an essential role in the initiation and regulation of chromosomal replication. ATP-DnaA binds to the origin of replication (oriC) to initiate formation of the DNA replication initiation complex once per cell cycle. Binds the DnaA box (a 9 base pair repeat at the origin) and separates the double-stranded (ds)DNA. Forms a right-handed helical filament on oriC DNA; dsDNA binds to the exterior of the filament while single-stranded (ss)DNA is stabiized in the filament's interior. The ATP-DnaA-oriC complex binds and stabilizes one strand of the AT-rich DNA unwinding element (DUE), permitting loading of DNA polymerase. After initiation quickly degrades to an ADP-DnaA complex that is not apt for DNA replication. Binds acidic phospholipids. The protein is Chromosomal replication initiator protein DnaA of Edwardsiella ictaluri (strain 93-146).